The following is a 169-amino-acid chain: Ribosome maturation factor RimM (169 aa).

In terms of domain architecture, PRC barrel spans 95–168; that stretch reads PPDTAYIHDL…EMTIRRFDEF (74 aa).

Belongs to the RimM family. In terms of assembly, binds ribosomal protein uS19.

The protein resides in the cytoplasm. Functionally, an accessory protein needed during the final step in the assembly of 30S ribosomal subunit, possibly for assembly of the head region. Essential for efficient processing of 16S rRNA. May be needed both before and after RbfA during the maturation of 16S rRNA. It has affinity for free ribosomal 30S subunits but not for 70S ribosomes. The sequence is that of Ribosome maturation factor RimM from Prosthecochloris aestuarii (strain DSM 271 / SK 413).